Here is an 85-residue protein sequence, read N- to C-terminus: Toxin Cll7 (85 aa).

The first 19 residues, 1–19, serve as a signal peptide directing secretion; it reads MNSLLMITACLVLFGTVWA. In terms of domain architecture, LCN-type CS-alpha/beta spans 20–83; that stretch reads KEGYLVNTYT…TWPLPNKTCG (64 aa). Intrachain disulfides connect Cys31/Cys82, Cys35/Cys58, Cys44/Cys63, and Cys48/Cys65.

The protein belongs to the long (4 C-C) scorpion toxin superfamily. Sodium channel inhibitor family. Beta subfamily. In terms of tissue distribution, expressed by the venom gland.

The protein localises to the secreted. In terms of biological role, beta toxins bind voltage-independently at site-4 of sodium channels (Nav) and shift the voltage of activation toward more negative potentials thereby affecting sodium channel activation and promoting spontaneous and repetitive firing. This Centruroides limpidus (Mexican scorpion) protein is Toxin Cll7.